The following is a 493-amino-acid chain: Glutamate--tRNA ligase (493 aa).

The 'HIGH' region motif lies at proline 10 to threonine 20. Residues cysteine 107, cysteine 109, cysteine 134, and histidine 136 each contribute to the Zn(2+) site. The short motif at lysine 251–arginine 255 is the 'KMSKS' region element. Lysine 254 contacts ATP.

The protein belongs to the class-I aminoacyl-tRNA synthetase family. Glutamate--tRNA ligase type 1 subfamily. As to quaternary structure, monomer. It depends on Zn(2+) as a cofactor.

It localises to the cytoplasm. It carries out the reaction tRNA(Glu) + L-glutamate + ATP = L-glutamyl-tRNA(Glu) + AMP + diphosphate. Its function is as follows. Catalyzes the attachment of glutamate to tRNA(Glu) in a two-step reaction: glutamate is first activated by ATP to form Glu-AMP and then transferred to the acceptor end of tRNA(Glu). The polypeptide is Glutamate--tRNA ligase (Stutzerimonas stutzeri (strain A1501) (Pseudomonas stutzeri)).